A 213-amino-acid chain; its full sequence is Protein-L-isoaspartate O-methyltransferase (213 aa).

The active site involves S58.

It belongs to the methyltransferase superfamily. L-isoaspartyl/D-aspartyl protein methyltransferase family.

It localises to the cytoplasm. It catalyses the reaction [protein]-L-isoaspartate + S-adenosyl-L-methionine = [protein]-L-isoaspartate alpha-methyl ester + S-adenosyl-L-homocysteine. In terms of biological role, catalyzes the methyl esterification of L-isoaspartyl residues in peptides and proteins that result from spontaneous decomposition of normal L-aspartyl and L-asparaginyl residues. It plays a role in the repair and/or degradation of damaged proteins. The sequence is that of Protein-L-isoaspartate O-methyltransferase from Chlorobaculum tepidum (strain ATCC 49652 / DSM 12025 / NBRC 103806 / TLS) (Chlorobium tepidum).